Consider the following 500-residue polypeptide: Probable cytosol aminopeptidase (500 aa).

Residues Lys265 and Asp270 each contribute to the Mn(2+) site. Lys277 is a catalytic residue. Asp288, Asp347, and Glu349 together coordinate Mn(2+). Arg351 is an active-site residue.

The protein belongs to the peptidase M17 family. It depends on Mn(2+) as a cofactor.

Its subcellular location is the cytoplasm. The catalysed reaction is Release of an N-terminal amino acid, Xaa-|-Yaa-, in which Xaa is preferably Leu, but may be other amino acids including Pro although not Arg or Lys, and Yaa may be Pro. Amino acid amides and methyl esters are also readily hydrolyzed, but rates on arylamides are exceedingly low.. The enzyme catalyses Release of an N-terminal amino acid, preferentially leucine, but not glutamic or aspartic acids.. Functionally, presumably involved in the processing and regular turnover of intracellular proteins. Catalyzes the removal of unsubstituted N-terminal amino acids from various peptides. This chain is Probable cytosol aminopeptidase, found in Corynebacterium diphtheriae (strain ATCC 700971 / NCTC 13129 / Biotype gravis).